A 121-amino-acid chain; its full sequence is Protein PilH (121 aa).

The 117-residue stretch at 3-119 (RILIVDDSPT…TLLKTINAVL (117 aa)) folds into the Response regulatory domain. Asp52 is modified (4-aspartylphosphate).

In terms of biological role, may be a part of a signal-transduction system that regulates twitching motility by controlling pilus function (extension and retraction). The polypeptide is Protein PilH (pilH) (Pseudomonas aeruginosa (strain ATCC 15692 / DSM 22644 / CIP 104116 / JCM 14847 / LMG 12228 / 1C / PRS 101 / PAO1)).